Consider the following 161-residue polypeptide: Endoribonuclease YbeY (161 aa).

Zn(2+) is bound by residues histidine 127, histidine 131, and histidine 137.

The protein belongs to the endoribonuclease YbeY family. It depends on Zn(2+) as a cofactor.

The protein localises to the cytoplasm. Its function is as follows. Single strand-specific metallo-endoribonuclease involved in late-stage 70S ribosome quality control and in maturation of the 3' terminus of the 16S rRNA. The protein is Endoribonuclease YbeY of Listeria monocytogenes serotype 4a (strain HCC23).